We begin with the raw amino-acid sequence, 514 residues long: Maturase K (514 aa).

It belongs to the intron maturase 2 family. MatK subfamily.

Its subcellular location is the plastid. It is found in the chloroplast. In terms of biological role, usually encoded in the trnK tRNA gene intron. Probably assists in splicing its own and other chloroplast group II introns. This is Maturase K from Zamia integrifolia (Coontie).